The primary structure comprises 189 residues: Isopentenyl-diphosphate Delta-isomerase 2 (189 aa).

Mn(2+) is bound by residues His24 and His30. In terms of domain architecture, Nudix hydrolase spans 28–160 (ALHRAISIFV…PETYSFWLAA (133 aa)). Residue Cys65 is part of the active site. Cys65 is a Mg(2+) binding site. His67 lines the Mn(2+) pocket. Mg(2+) is bound at residue Glu85. The Mn(2+) site is built by Glu110 and Glu112. Residue Glu112 is part of the active site.

It belongs to the IPP isomerase type 1 family. It depends on Mg(2+) as a cofactor. The cofactor is Mn(2+).

It is found in the cytoplasm. It catalyses the reaction isopentenyl diphosphate = dimethylallyl diphosphate. It functions in the pathway isoprenoid biosynthesis; dimethylallyl diphosphate biosynthesis; dimethylallyl diphosphate from isopentenyl diphosphate: step 1/1. Catalyzes the 1,3-allylic rearrangement of the homoallylic substrate isopentenyl (IPP) to its highly electrophilic allylic isomer, dimethylallyl diphosphate (DMAPP). This Aromatoleum aromaticum (strain DSM 19018 / LMG 30748 / EbN1) (Azoarcus sp. (strain EbN1)) protein is Isopentenyl-diphosphate Delta-isomerase 2.